A 546-amino-acid polypeptide reads, in one-letter code: uncharacterized protein (546 aa).

Helical transmembrane passes span 4-23 (ILLENPLLVLFLVAAIGYPL), 30-47 (GSSLGVAAVLFVGLAMGS), 57-79 (IVYVLGLALFVYTIGLSSGPAFV), 91-113 (ALIIGMLLVAAGLVVGAQRLLGF), and 155-177 (PVVGYSVAYPMGVMGVVLAISLV). 2 RCK C-terminal domains span residues 189–274 (GKRL…FLGE) and 275–359 (VSEE…FFGD). The next 6 membrane-spanning stretches (helical) occupy residues 372–394 (FSLGLALGLLLGIIPIPLPGGIT), 399–421 (FAGGPLIVALILGTIGRSGSMVW), 434–456 (IGLVLFLAGVGTRAGYGFVTTLA), 460–482 (GLAIFAAGAVVTCLTALATLWIG), 489–511 (PMSILIGMVAGLQTQPAVLGYAL), and 521–543 (IGYASVYPVATISKILIVQILLT).

Belongs to the AAE transporter (TC 2.A.81) family.

The protein resides in the cell membrane. This is an uncharacterized protein from Geobacter sulfurreducens (strain ATCC 51573 / DSM 12127 / PCA).